The following is a 226-amino-acid chain: Phosphate propanoyltransferase (226 aa).

CoA is bound at residue 44 to 46 (VSN). Zn(2+) contacts are provided by His-48 and His-50. CoA is bound by residues Met-72, Lys-90, and Arg-97. Arg-103 provides a ligand contact to phosphate. Residue Glu-109 coordinates Zn(2+). Phe-116 provides a ligand contact to CoA. Zn(2+) contacts are provided by His-157, His-159, and His-204. A CoA-binding site is contributed by Asn-211.

The protein belongs to the PduL family. As to quaternary structure, full-length protein forms large oligomers. Homodimer, when purified in the absence of the encapsulation peptide (EP, residues 1-47). The EP may influence oligomerization. Zn(2+) is required as a cofactor.

Its subcellular location is the bacterial microcompartment. The enzyme catalyses propanoyl-CoA + phosphate = propanoyl phosphate + CoA. It functions in the pathway polyol metabolism; 1,2-propanediol degradation. In terms of biological role, involved in 1,2-propanediol (1,2-PD) utilization within the bacterial microcompartment (BMC) dedicated to 1,2-PD degradation by catalyzing the conversion of propanoyl-CoA to propanoyl-phosphate. CoA is regenerated within the pdu BMC (for use by PduP) via this enzyme, although there must also be cofactor transport across the BMC. Directly targeted to the BMC. Phosphate is probably the first substrate to bind in the forward direction. CoA is probably the first substrate to bind in the reverse direction, and might bind to the enzyme as the BMC assembles, ensuring cofactor encapsulation. This chain is Phosphate propanoyltransferase, found in Rhodopseudomonas palustris (strain BisB18).